Reading from the N-terminus, the 126-residue chain is UPF0538 protein C2orf76 homolog (126 aa).

The protein belongs to the UPF0538 family.

This Xenopus tropicalis (Western clawed frog) protein is UPF0538 protein C2orf76 homolog.